A 98-amino-acid chain; its full sequence is Integration host factor subunit alpha (98 aa).

The interval 49 to 70 is disordered; it reads FGNFDLRDKNQRPGRNPKTGED.

This sequence belongs to the bacterial histone-like protein family. Heterodimer of an alpha and a beta chain.

Its function is as follows. This protein is one of the two subunits of integration host factor, a specific DNA-binding protein that functions in genetic recombination as well as in transcriptional and translational control. In Shewanella baltica (strain OS223), this protein is Integration host factor subunit alpha.